The primary structure comprises 281 residues: Proteasome subunit beta (281 aa).

Positions 1-53 are cleaved as a propeptide — removed in mature form; by autocatalysis; that stretch reads MEANTRSTGRLPAAFLTPGSSSFMDFLGEHQPEMLPGNRQLPPVQGVIEAPHG. Thr54 (nucleophile) is an active-site residue.

The protein belongs to the peptidase T1B family. In terms of assembly, the 20S proteasome core is composed of 14 alpha and 14 beta subunits that assemble into four stacked heptameric rings, resulting in a barrel-shaped structure. The two inner rings, each composed of seven catalytic beta subunits, are sandwiched by two outer rings, each composed of seven alpha subunits. The catalytic chamber with the active sites is on the inside of the barrel. Has probably a gated structure, the ends of the cylinder being occluded by the N-termini of the alpha-subunits. Is likely capped by the proteasome-associated ATPase, ARC.

Its subcellular location is the cytoplasm. It carries out the reaction Cleavage of peptide bonds with very broad specificity.. Its pathway is protein degradation; proteasomal Pup-dependent pathway. With respect to regulation, the formation of the proteasomal ATPase ARC-20S proteasome complex, likely via the docking of the C-termini of ARC into the intersubunit pockets in the alpha-rings, may trigger opening of the gate for substrate entry. Interconversion between the open-gate and close-gate conformations leads to a dynamic regulation of the 20S proteasome proteolysis activity. Peptidolytic activity is completely inhibited by lactacystin, and to a lesser extent, by N-acetyl-Leu-Leu-norleucinal (Ac-LLnL) and benzoyloxycarbonyl-Leu-Leu-Leu-vinylsulfone (Z-LLL-VS) in vitro. Component of the proteasome core, a large protease complex with broad specificity involved in protein degradation. The S.coelicolor proteasome is able to cleave oligopeptides after hydrophobic residues, but not after basic or acidic residues, thus displaying chymotrypsin-like activity but not trypsin-like activity. This is Proteasome subunit beta from Streptomyces coelicolor (strain ATCC BAA-471 / A3(2) / M145).